A 313-amino-acid polypeptide reads, in one-letter code: MTTTPNTPLPNSLQKPLERFYEFLRSEKGLSLHTQRNYKQQLETMAHHLAEMGLKDWSQVDAGWVRQLAGKGMREGMKASSLATRLSSLRSFFDFLILRGEMLANPAKGVSAPRKKRPLPKNLDVDEVNQLLEVNEDDPLAVRDRAMMELMYGAGLRLAELVSVDVRDVQLRSGELRVIGKGDKERKVPFSGMATEWVGKWLRVRGDLAAPGEPALFVSKLGTRISHRSVQKRMAEWGQKQSVASHISPHKLRHSFATHMLESSNNLRAVQELLGHENISTTQIYTHLDFQHLAQAYDQAHPRARKRNDDKSD.

A Core-binding (CB) domain is found at 11–97 (NSLQKPLERF…SLRSFFDFLI (87 aa)). In terms of domain architecture, Tyr recombinase spans 118-298 (PLPKNLDVDE…DFQHLAQAYD (181 aa)). Residues arginine 157, lysine 181, histidine 250, arginine 253, and histidine 276 contribute to the active site. Tyrosine 285 functions as the O-(3'-phospho-DNA)-tyrosine intermediate in the catalytic mechanism.

Belongs to the 'phage' integrase family. XerC subfamily. As to quaternary structure, forms a cyclic heterotetrameric complex composed of two molecules of XerC and two molecules of XerD.

Its subcellular location is the cytoplasm. Its function is as follows. Site-specific tyrosine recombinase, which acts by catalyzing the cutting and rejoining of the recombining DNA molecules. The XerC-XerD complex is essential to convert dimers of the bacterial chromosome into monomers to permit their segregation at cell division. It also contributes to the segregational stability of plasmids. The polypeptide is Tyrosine recombinase XerC (Vibrio campbellii (strain ATCC BAA-1116)).